The chain runs to 660 residues: Leucine-rich repeat transmembrane protein FLRT2 (660 aa).

The signal sequence occupies residues 1–35; it reads MGLQTAKWPSHGTFVLKFWLIMSLGLYSHVSKLLA. Disulfide bonds link cysteine 36/cysteine 42 and cysteine 40/cysteine 49. An LRRNT domain is found at 36–67; the sequence is CPSVCRCDRNFVYCNERSLTSVPLGIPEGVTV. The Extracellular segment spans residues 36-540; the sequence is CPSVCRCDRN…QTTSHTMGSP (505 aa). 10 LRR repeats span residues 62 to 87, 88 to 108, 109 to 131, 132 to 157, 159 to 181, 183 to 202, 203 to 228, 229 to 251, 252 to 274, and 275 to 298; these read PEGVTVLYLHNNQINNAGFPAELHNV, QSVHTVYLYGNQLDEFPMNLP, KNVRVLHLQENNIQTISRAALAQ, LLKLEELHLDDNSISTVGVEDGAFRE, ISLKLLFLSKNHLSSVPVGLPVD, QELRVDENRIAVISDMAFQN, LTSLERLIVDGNLLTNKGIADGTFSH, LTKLKEFSIVRNSLSHPPPDLPG, THLIRLYLQDNQINHIPLTAFAN, and LRKLERLDISNNQLRMLTQGVFDH. N-linked (GlcNAc...) asparagine glycosylation occurs at asparagine 202. Cystine bridges form between cysteine 314-cysteine 339 and cysteine 316-cysteine 360. In terms of domain architecture, LRRCT spans 338-361; that stretch reads MCQGPEQVRGMAVRELNMNLLSCP. Low complexity predominate over residues 372-396; sequence PAPSTVSPTTQSPTVSVPSPSRGSV. Residues 372–413 are disordered; sequence PAPSTVSPTTQSPTVSVPSPSRGSVPPAPAPSKLPTIPDWDG. One can recognise a Fibronectin type-III domain in the interval 419-517; sequence PPISERIQLS…ICSEATTHAS (99 aa). Residues 541-561 form a helical membrane-spanning segment; sequence FLLAGLIGGAVIFVLVVLLSV. Topologically, residues 562–660 are cytoplasmic; the sequence is FCWHMHKKGR…SVPDLEHCHT (99 aa).

As to quaternary structure, self-associates (via leucine-rich repeats), giving rise to homooligomers. Interacts with FGFR1. Interacts with FGFR2. Interacts (via extracellular domain) with ADGRL1/LPHN1. Interacts (via extracellular domain) with ADGRL3 (via olfactomedin-like domain). Interacts (via extracellular domain) with UNC5D (via the first Ig-like domain). Can also interact (via extracellular domain) with UNC5B, but with much lower affinity. Interacts (via extracellular domain) with FN1. In terms of processing, N-glycosylated. Post-translationally, proteolytic cleavage in the juxtamembrane region gives rise to a soluble ectodomain. Cleavage is probably effected by a metalloprotease. Detected in brain (at protein level).

It is found in the cell membrane. It localises to the endoplasmic reticulum membrane. Its subcellular location is the synapse. The protein resides in the synaptosome. The protein localises to the cell junction. It is found in the focal adhesion. It localises to the secreted. Its subcellular location is the extracellular space. The protein resides in the extracellular matrix. The protein localises to the microsome membrane. Functions in cell-cell adhesion, cell migration and axon guidance. Mediates cell-cell adhesion via its interactions with ADGRL3 and probably also other latrophilins that are expressed at the surface of adjacent cells. May play a role in the migration of cortical neurons during brain development via its interaction with UNC5D. Mediates axon growth cone collapse and plays a repulsive role in neuron guidance via its interaction with UNC5D, and possibly also other UNC-5 family members. Plays a role in fibroblast growth factor-mediated signaling cascades. Required for normal organization of the cardiac basement membrane during embryogenesis, and for normal embryonic epicardium and heart morphogenesis. This Rattus norvegicus (Rat) protein is Leucine-rich repeat transmembrane protein FLRT2.